Here is a 91-residue protein sequence, read N- to C-terminus: Acylphosphatase (91 aa).

One can recognise an Acylphosphatase-like domain in the interval arginine 3–arginine 90. Catalysis depends on residues arginine 18 and asparagine 36.

This sequence belongs to the acylphosphatase family.

It carries out the reaction an acyl phosphate + H2O = a carboxylate + phosphate + H(+). This Methanospirillum hungatei JF-1 (strain ATCC 27890 / DSM 864 / NBRC 100397 / JF-1) protein is Acylphosphatase (acyP).